A 62-amino-acid polypeptide reads, in one-letter code: UPF0337 protein gsr0040 (62 aa).

2 stretches are compositionally biased toward basic and acidic residues: residues 1 to 15 (MGIDKRAEATAKDVQ) and 27 to 62 (DDPKLELEGKAKQVEASAEHKKEDLKDQAHRTIDNV). The interval 1–62 (MGIDKRAEAT…DQAHRTIDNV (62 aa)) is disordered.

The protein belongs to the UPF0337 (CsbD) family.

The sequence is that of UPF0337 protein gsr0040 from Gloeobacter violaceus (strain ATCC 29082 / PCC 7421).